Consider the following 710-residue polypeptide: MSTILIFIAALLACSLLAIWRFRVKSRRGSLPWFSAFQDAQTRKLLPEERSAVENYLDNLSQIQQVPGPTGASAAPISLTLNAESNSVVILTHSITRYGITTDDPNKWRYYLDSVEVHLPPFWEQYINDENNVELILTDTLPLVISLNGHTLQEYMQESRGYALQNTASTQASIRGEESEQIELLNIRQETHEEYALSRPAGLREALLIVASFLLFFFCLITPDVFVPWMIGGAILLLAAGLWGLFAPPSKSALREIHCLRGTPRRWGLFGENNQEQINNISLGIIDLIYPAHWQPYITQDLGQQTDIDIYLDRHVARQGRFLSLHDEVKNFPLQHWLRSTVIAIGSLLVLFMLLFWIPLDMPIKFTLSWMKGAQTIEATTVKQLEKAGVRVGDTLHLSGKGMCNIHSGATWSGQSNSPFMPFDCSQIIWNDAPALPLPESDLVNKAMALSQAVNRQLHPKPEDDSRVSASLRSAIQKSGMVLLDDFGDIVLKTADLCAAEDECVRLKNALVNLGNSKDWNALVKRANAGKLDGVNVLLRPVSAESLENLVTTSTAPFISRETARAAQSLNSPAPGGFLIASDEGSELVDQAWPSTPLYDYPAQEQWSAFQRLAQTLMQTPFSAEGIVTSVYTDANGTQHISLHRIPDKSGWWRYLGTTLLMLAMIVSAVYNGIQAFRRYQRHRTRMADIQEYYESCLNPRLTVSPENLI.

Met-1 is a topological domain (periplasmic). The helical transmembrane segment at 2-22 threads the bilayer; the sequence is STILIFIAALLACSLLAIWRF. The Cytoplasmic segment spans residues 23-204; that stretch reads RVKSRRGSLP…YALSRPAGLR (182 aa). The next 2 membrane-spanning stretches (helical) occupy residues 205 to 225 and 226 to 246; these read EALL…TPDV and FVPW…WGLF. The Cytoplasmic segment spans residues 247 to 339; the sequence is APPSKSALRE…KNFPLQHWLR (93 aa). The chain crosses the membrane as a helical span at residues 340 to 360; that stretch reads STVIAIGSLLVLFMLLFWIPL. Residues 361-656 are Periplasmic-facing; sequence DMPIKFTLSW…PDKSGWWRYL (296 aa). A helical transmembrane segment spans residues 657-677; the sequence is GTTLLMLAMIVSAVYNGIQAF. Residues 678 to 710 lie on the Cytoplasmic side of the membrane; it reads RRYQRHRTRMADIQEYYESCLNPRLTVSPENLI.

The protein belongs to the IgaA family.

The protein localises to the cell inner membrane. In Salmonella typhi, this protein is Putative membrane protein IgaA homolog (yrfF).